We begin with the raw amino-acid sequence, 617 residues long: MAFPHRLDAPELPDFSMLKRLARDQLIYLLEQLPGKKDLFIEADLMSPLDRIANVSILKQHEVDKLYKVENKLTLSSNEQLCFLVRPRIKTMRYIANLVNADKLAGRVRKYKIILSPQKFYACEMVLEEEGVYGDVSCDEWAFSLLPLDVDLLSMELPEFFRDYFLEGDQRWINTVAQALHLLSTLYGPFPNCYGIGRCTKMSYDLWRKLEEEEDSETKGRRPEIGHIFLLDRDVDFVTALCSQVVYEGLVDDTFRIKCGSVDFGPEVTSSDKSLKVLLNAEDKVFSEIRNEHFSNVFGFLSQKARNLQAQYDRRRGMDIKQMKNFVSQELKGLKQEHRLLSLHIGACESIMKKKTKQDFQELIKTEHALLEGFNIRESTSYIEEHIDRQVSPIESLRLMCLLSITENGLIPKDYRSLKTQYLQSYGPEHLLTFSNLRRAGLLTEQASGDTLTAVENKVSKLVTDKAAGKITDAFSSLAKRSNFRAISKKLNLIPRVDGEYDLKVPRDMAYVFSGAYVPLSCRIIEQVLDRRSWQGLDEVVRLLNCSDFAFTDMAKEDKASSESLRLILVVFLGGCTFSEISALRFLGREKGYRFIFLTTAVTNSARLMEAMSEVKS.

N-acetylalanine is present on A2.

This sequence belongs to the STXBP/unc-18/SEC1 family. As to quaternary structure, interacts with RAB11A and VIPAS39. Associates with adaptor protein complex 3 (AP-3), clathrin:AP-3 and clathrin:HGS complexes. Phosphorylated on tyrosine residues. Ubiquitous.

The protein resides in the late endosome membrane. The protein localises to the lysosome membrane. Its subcellular location is the early endosome. It localises to the cytoplasmic vesicle. It is found in the clathrin-coated vesicle. The protein resides in the recycling endosome. Its function is as follows. May play a role in vesicle-mediated protein trafficking to lysosomal compartments and in membrane docking/fusion reactions of late endosomes/lysosomes. Mediates phagolysosomal fusion in macrophages. Proposed to be involved in endosomal maturation implicating VIPAS39. In epithelial cells, the VPS33B:VIPAS39 complex may play a role in the apical recycling pathway and in the maintenance of the apical-basolateral polarity. Seems to be involved in the sorting of specific cargos from the trans-Golgi network to alpha-granule-destined multivesicular bodies (MVBs) promoting MVBs maturation in megakaryocytes. The chain is Vacuolar protein sorting-associated protein 33B (Vps33b) from Rattus norvegicus (Rat).